The chain runs to 141 residues: Large ribosomal subunit protein uL16c (141 aa).

This sequence belongs to the universal ribosomal protein uL16 family. As to quaternary structure, part of the 50S ribosomal subunit.

Its subcellular location is the plastid. The protein localises to the chloroplast. This Zygnema circumcarinatum (Green alga) protein is Large ribosomal subunit protein uL16c.